Consider the following 256-residue polypeptide: Thiazole synthase (256 aa).

Catalysis depends on Lys-95, which acts as the Schiff-base intermediate with DXP. 1-deoxy-D-xylulose 5-phosphate contacts are provided by residues Gly-156, 182 to 183 (AG), and 204 to 205 (NT).

It belongs to the ThiG family. Homotetramer. Forms heterodimers with either ThiH or ThiS.

The protein localises to the cytoplasm. The enzyme catalyses [ThiS sulfur-carrier protein]-C-terminal-Gly-aminoethanethioate + 2-iminoacetate + 1-deoxy-D-xylulose 5-phosphate = [ThiS sulfur-carrier protein]-C-terminal Gly-Gly + 2-[(2R,5Z)-2-carboxy-4-methylthiazol-5(2H)-ylidene]ethyl phosphate + 2 H2O + H(+). It functions in the pathway cofactor biosynthesis; thiamine diphosphate biosynthesis. Catalyzes the rearrangement of 1-deoxy-D-xylulose 5-phosphate (DXP) to produce the thiazole phosphate moiety of thiamine. Sulfur is provided by the thiocarboxylate moiety of the carrier protein ThiS. In vitro, sulfur can be provided by H(2)S. The protein is Thiazole synthase of Escherichia coli O81 (strain ED1a).